The primary structure comprises 39 residues: Natriuretic peptide PaNP-d (39 aa).

A propeptide spanning residues 1-8 (SGSKTAEI) is cleaved from the precursor. Positions 1–39 (SGSKTAEIDDGCFGLPLDPIGSTSGMGCRSVPKPIPGGS) are disordered. A disulfide bridge links cysteine 12 with cysteine 28.

The protein belongs to the natriuretic peptide family. As to expression, expressed by the venom gland.

The protein resides in the secreted. Functionally, snake venom natriuretic peptide that targets both NPR1 and NPR2. Exhibits hypotensive and vasodepressor activities. This Pseudechis australis (Mulga snake) protein is Natriuretic peptide PaNP-d.